A 335-amino-acid chain; its full sequence is MRTIKEIALESGYSPATVSRLLNNDPNLSITADTKNKILEIANKLGYWEDHQEKKIKPTIALLYRVNHNEQLQDEYFTSLKQALVSTVERDALKMKTFYDIEDLIKNASLFQGFIGVGAEPIENAQLVKLHKVLPNGVFVDTNPAPELFDSIRPNLPFTVKNAIDLFIKNGINKIGFIGGVGPKHDHIQENDLRSITFVEYMKTRGMDTKWTCVEGPVSVENGYKLGKMVLAKYKNDLPEAFLIASDTLAVGVLQAFNEENVNVPKDTKILSINNSNVVKYVSPPLSSFNINQQEMIDMALDTLTHLIIRPDRPNIDIRMNTNLVVRKSFVPQEK.

The region spanning Met1 to Pro58 is the HTH lacI-type domain. Residues Ile4–Asn23 constitute a DNA-binding region (H-T-H motif).

Its pathway is carbohydrate metabolism; lactose degradation [regulation]. Its function is as follows. Negatively regulates the transcription of the lactose utilization genes lacL and lacM. The sequence is that of HTH-type transcriptional regulator LacR (lacR) from Lactobacillus helveticus (Lactobacillus suntoryeus).